Reading from the N-terminus, the 399-residue chain is Succinyl-diaminopimelate desuccinylase (399 aa).

Residue H80 coordinates Zn(2+). Residue D82 is part of the active site. D113 lines the Zn(2+) pocket. E147 serves as the catalytic Proton acceptor. The Zn(2+) site is built by E148, E176, and H366.

The protein belongs to the peptidase M20A family. DapE subfamily. In terms of assembly, homodimer. Zn(2+) serves as cofactor. The cofactor is Co(2+).

It carries out the reaction N-succinyl-(2S,6S)-2,6-diaminopimelate + H2O = (2S,6S)-2,6-diaminopimelate + succinate. It functions in the pathway amino-acid biosynthesis; L-lysine biosynthesis via DAP pathway; LL-2,6-diaminopimelate from (S)-tetrahydrodipicolinate (succinylase route): step 3/3. In terms of biological role, catalyzes the hydrolysis of N-succinyl-L,L-diaminopimelic acid (SDAP), forming succinate and LL-2,6-diaminopimelate (DAP), an intermediate involved in the bacterial biosynthesis of lysine and meso-diaminopimelic acid, an essential component of bacterial cell walls. This chain is Succinyl-diaminopimelate desuccinylase, found in Colwellia psychrerythraea (strain 34H / ATCC BAA-681) (Vibrio psychroerythus).